The chain runs to 200 residues: Holliday junction branch migration complex subunit RuvA (200 aa).

Positions 1–64 (MIGHLRGIIV…EDAHTLYGFH (64 aa)) are domain I. A domain II region spans residues 65-143 (NDHERRLFRA…RWHTNDTPSP (79 aa)). Residues 133-152 (SRWHTNDTPSPEGLRSSNTQ) are disordered. The segment at 144 to 148 (EGLRS) is flexible linker. Residues 149–200 (SNTQPTQDAISALMALGYKPQEAKRAIDAIQKPDLSAETLIRLALKQMVLGT) are domain III.

The protein belongs to the RuvA family. In terms of assembly, homotetramer. Forms an RuvA(8)-RuvB(12)-Holliday junction (HJ) complex. HJ DNA is sandwiched between 2 RuvA tetramers; dsDNA enters through RuvA and exits via RuvB. An RuvB hexamer assembles on each DNA strand where it exits the tetramer. Each RuvB hexamer is contacted by two RuvA subunits (via domain III) on 2 adjacent RuvB subunits; this complex drives branch migration. In the full resolvosome a probable DNA-RuvA(4)-RuvB(12)-RuvC(2) complex forms which resolves the HJ.

It is found in the cytoplasm. In terms of biological role, the RuvA-RuvB-RuvC complex processes Holliday junction (HJ) DNA during genetic recombination and DNA repair, while the RuvA-RuvB complex plays an important role in the rescue of blocked DNA replication forks via replication fork reversal (RFR). RuvA specifically binds to HJ cruciform DNA, conferring on it an open structure. The RuvB hexamer acts as an ATP-dependent pump, pulling dsDNA into and through the RuvAB complex. HJ branch migration allows RuvC to scan DNA until it finds its consensus sequence, where it cleaves and resolves the cruciform DNA. This chain is Holliday junction branch migration complex subunit RuvA, found in Coxiella burnetii (strain CbuK_Q154) (Coxiella burnetii (strain Q154)).